We begin with the raw amino-acid sequence, 143 residues long: Brain ribonuclease (143 aa).

The disordered stretch occupies residues Lys1–Gly21. 2 residues coordinate substrate: Lys7 and Arg10. His12 functions as the Proton acceptor in the catalytic mechanism. 4 disulfides stabilise this stretch: Cys26/Cys84, Cys40/Cys95, Cys58/Cys110, and Cys65/Cys72. A substrate-binding site is contributed by Lys41–Thr45. An N-linked (GlcNAc...) asparagine glycan is attached at Asn62. Positions 66 and 85 each coordinate substrate. Residue His119 is the Proton donor of the active site. An O-linked (GalNAc...) threonine glycan is attached at Thr129. Ser133 carries O-linked (GalNAc...) serine glycosylation.

Belongs to the pancreatic ribonuclease family.

It localises to the secreted. This chain is Brain ribonuclease (BRN), found in Ovis aries (Sheep).